Here is a 156-residue protein sequence, read N- to C-terminus: Ribosomal RNA large subunit methyltransferase H (156 aa).

S-adenosyl-L-methionine-binding positions include L73, G104, and L123–L128.

The protein belongs to the RNA methyltransferase RlmH family. Homodimer.

It is found in the cytoplasm. The catalysed reaction is pseudouridine(1915) in 23S rRNA + S-adenosyl-L-methionine = N(3)-methylpseudouridine(1915) in 23S rRNA + S-adenosyl-L-homocysteine + H(+). In terms of biological role, specifically methylates the pseudouridine at position 1915 (m3Psi1915) in 23S rRNA. This Edwardsiella ictaluri (strain 93-146) protein is Ribosomal RNA large subunit methyltransferase H.